The chain runs to 353 residues: MARILLNDVRKSYAGNQVIHGITMEIADGEFVVIVGPSGCGKSTLLRMVAGLEAISAGTVEIGGKVVNDLEPRQRDIAMVFQNYALYPHMSVRENMAYGLKIAKLPKTEIEARVAKAATMLELEPYLDRKPRALSGGQRQRVAMGRALVREPAALLLDEPLSNLDAKLRVQMRLQIKEMHLRTGQTTLYVTHDQVEAMTLADRLIVMNKGVAEQIATPLEVYERPASEFVAGFIGSPAMNIFTVDAADGRVTLPGGAVLPLPVPRGGDLRLGLRPEHLRTAQPGEAAIPVVLRSVERLGADAFGYGMIEGSEVPMVLRLPGTSQLSRGDRVEAVPDPAHLHFFDPVSGRRIEG.

The ABC transporter domain occupies 4–234; that stretch reads ILLNDVRKSY…PASEFVAGFI (231 aa). Position 36–43 (36–43) interacts with ATP; the sequence is GPSGCGKS.

It belongs to the ABC transporter superfamily. sn-glycerol-3-phosphate importer (TC 3.A.1.1.3) family. In terms of assembly, the complex is composed of two ATP-binding proteins (UgpC), two transmembrane proteins (UgpA and UgpE) and a solute-binding protein (UgpB).

The protein resides in the cell inner membrane. The catalysed reaction is sn-glycerol 3-phosphate(out) + ATP + H2O = sn-glycerol 3-phosphate(in) + ADP + phosphate + H(+). In terms of biological role, part of the ABC transporter complex UgpBAEC involved in sn-glycerol-3-phosphate (G3P) import. Responsible for energy coupling to the transport system. This chain is sn-glycerol-3-phosphate import ATP-binding protein UgpC, found in Paracoccus denitrificans (strain Pd 1222).